The sequence spans 68 residues: Copper transport protein ATOX1 (68 aa).

Residues 1-63 form the HMA domain; the sequence is MPKHEFSVDM…TLNKTGKAVS (63 aa). 2 residues coordinate Cu cation: Cys12 and Cys15. A Phosphoserine modification is found at Ser47. N6-acetyllysine is present on Lys60.

This sequence belongs to the ATX1 family. As to quaternary structure, homodimer. Interacts with ATP7B. Interacts with ATP7A. Interacts (via dimer form) with SLC31A1 (via C-terminal domain); this interaction improves ATOX1 stability and controls intracellular Cu(I) levels.

Its function is as follows. Binds and deliver cytosolic copper to the copper ATPase proteins. May be important in cellular antioxidant defense. This Rattus norvegicus (Rat) protein is Copper transport protein ATOX1.